We begin with the raw amino-acid sequence, 80 residues long: RNA-binding protein Hfq (80 aa).

A Sm domain is found at 10 to 70; sequence DLFLNTVRKQ…ISTIMPGQPM (61 aa).

This sequence belongs to the Hfq family. As to quaternary structure, homohexamer.

Functionally, RNA chaperone that binds small regulatory RNA (sRNAs) and mRNAs to facilitate mRNA translational regulation in response to envelope stress, environmental stress and changes in metabolite concentrations. Also binds with high specificity to tRNAs. The chain is RNA-binding protein Hfq from Rhizobium etli (strain CIAT 652).